We begin with the raw amino-acid sequence, 79 residues long: Sperm-specific basic nuclear protein SP4 (79 aa).

The tract at residues 1-79 (MSKVSGGSRR…ARDYGSDYRS (79 aa)) is disordered. Residues 9–60 (RRTRARRPMSNRRGRRSQSAAHRSRAQRRRRRTGTTRRARTSTARRARTRTA) show a composition bias toward basic residues. Repeats lie at residues 45-52 (RRARTSTA) and 53-60 (RRARTRTA). The segment covering 61 to 79 (RRSDLTRMMARDYGSDYRS) has biased composition (basic and acidic residues).

The protein resides in the nucleus. The polypeptide is Sperm-specific basic nuclear protein SP4 (sp4-a) (Xenopus laevis (African clawed frog)).